A 238-amino-acid polypeptide reads, in one-letter code: MKINLFFVFLFELLHFVAAYSCEGDESAAIEAMNVLQVPYEKYNTDPVCAFDNSTVVELSDKTWDHVIESGKWFVQLTAEGCANCTLGELLFNDLSHAFHEKYPDVHFARVYLSSSLELSVRLLISRIPSYYFIDNQNFYRVSPQVLPKNKAIALYEKDGFKSMKKEQGFFSVNGPLKSFYWVFGKALALYGHLSQKYTPLGMNVAIFGISAYIMYRSSKKAKQKQAAAAAAAAAKKK.

A signal peptide spans 1–19 (MKINLFFVFLFELLHFVAA). Over 20–197 (YSCEGDESAA…LALYGHLSQK (178 aa)) the chain is Lumenal. A helical membrane pass occupies residues 198–216 (YTPLGMNVAIFGISAYIMY). The Cytoplasmic portion of the chain corresponds to 217–238 (RSSKKAKQKQAAAAAAAAAKKK).

The protein localises to the endoplasmic reticulum membrane. This is an uncharacterized protein from Schizosaccharomyces pombe (strain 972 / ATCC 24843) (Fission yeast).